A 209-amino-acid polypeptide reads, in one-letter code: Ribonuclease HII (209 aa).

Residues 19-209 (CTIVGVDEVG…ASGITKLYNK (191 aa)) form the RNase H type-2 domain. A divalent metal cation-binding residues include aspartate 25, glutamate 26, and aspartate 118.

It belongs to the RNase HII family. Requires Mn(2+) as cofactor. It depends on Mg(2+) as a cofactor.

The protein resides in the cytoplasm. It catalyses the reaction Endonucleolytic cleavage to 5'-phosphomonoester.. Endonuclease that specifically degrades the RNA of RNA-DNA hybrids. In Ehrlichia chaffeensis (strain ATCC CRL-10679 / Arkansas), this protein is Ribonuclease HII.